The following is a 426-amino-acid chain: MLDPTLLRQQLAKLAECLLTVRGFTLDVAALEALESERKRIQVHTQELQSLRNSKSKAIGQARSKGEDVSALMAEVAAFSDDLKASEIALEEIRTELEKVALDIPNLPQQDVPLGADERDNVEQARWGVPRTFDFAIKDHVELGACHGWLDAESAAKLSGARFTVLRGPIARLHRALAQCMLDLHVSQHGYEEVNVPIIVNADSLHGTGQLPKFEEDMFSTQLGEHRRYLISTSEISLTNLVRNEIIEADRLPLRMVAHSLCFRSEAGSGGRDTRGMIRQHQFEKVELVSVCKPQDSEGEHHRMTRCAETVLEMLGLPYRKILLCTGDMGFAATKTYDLEVWLPSQGMYREISSCSNCGDFQARRMQARWRNSVTGKPELVHTLNGSGVAVGRAMIAVMENYQNADGSITVPEVLRPYMDGLSRIG.

Residue Thr233–Glu235 participates in L-serine binding. Residue Arg264–Glu266 participates in ATP binding. Position 287 (Glu287) interacts with L-serine. Position 351 to 354 (Glu351 to Ser354) interacts with ATP. Ser387 is a binding site for L-serine.

Belongs to the class-II aminoacyl-tRNA synthetase family. Type-1 seryl-tRNA synthetase subfamily. Homodimer. The tRNA molecule binds across the dimer.

The protein localises to the cytoplasm. The enzyme catalyses tRNA(Ser) + L-serine + ATP = L-seryl-tRNA(Ser) + AMP + diphosphate + H(+). The catalysed reaction is tRNA(Sec) + L-serine + ATP = L-seryl-tRNA(Sec) + AMP + diphosphate + H(+). Its pathway is aminoacyl-tRNA biosynthesis; selenocysteinyl-tRNA(Sec) biosynthesis; L-seryl-tRNA(Sec) from L-serine and tRNA(Sec): step 1/1. Catalyzes the attachment of serine to tRNA(Ser). Is also able to aminoacylate tRNA(Sec) with serine, to form the misacylated tRNA L-seryl-tRNA(Sec), which will be further converted into selenocysteinyl-tRNA(Sec). This is Serine--tRNA ligase from Xylella fastidiosa (strain M23).